Here is a 130-residue protein sequence, read N- to C-terminus: Glycine cleavage system H protein (130 aa).

The Lipoyl-binding domain maps to 23-105 (IGIIGITDFA…YGKGWMIKVE (83 aa)). At lysine 64 the chain carries N6-lipoyllysine.

Belongs to the GcvH family. In terms of assembly, the glycine cleavage system is composed of four proteins: P, T, L and H. The cofactor is (R)-lipoate.

Its function is as follows. The glycine cleavage system catalyzes the degradation of glycine. The H protein shuttles the methylamine group of glycine from the P protein to the T protein. The protein is Glycine cleavage system H protein of Carboxydothermus hydrogenoformans (strain ATCC BAA-161 / DSM 6008 / Z-2901).